Reading from the N-terminus, the 371-residue chain is ETS-related transcription factor Elf-3 (371 aa).

A PNT domain is found at asparagine 46–serine 132. Positions serine 137 to lysine 145 match the 9aaTAD motif. A disordered region spans residues glycine 173 to arginine 251. A compositionally biased stretch (low complexity) spans proline 181–aspartate 216. Over residues glycine 231–lysine 241 the composition is skewed to basic and acidic residues. Residues histidine 242–arginine 251 show a composition bias toward basic residues. The ETS DNA-binding region spans threonine 273 to glycine 355.

This sequence belongs to the ETS family. In terms of assembly, interacts with TBP. Interacts with CREBBP and EP300; these act as transcriptional coactivators of ELF3 and positively modulate its function. Interacts with XRCC5/KU86 and XRCC6/KU70; these inhibit the ability of ELF3 to bind DNA and negatively modulate its transcriptional activity. Associated with CLND7 and POU2F3. Interacts with ZNF768. As to expression, expressed exclusively in tissues containing a high content of terminally differentiated epithelial cells including mammary gland, colon, trachea, kidney, prostate, uterus, stomach and skin.

It localises to the cytoplasm. Its subcellular location is the nucleus. Its function is as follows. Transcriptional activator that binds and transactivates ETS sequences containing the consensus nucleotide core sequence GGA[AT]. Acts synergistically with POU2F3 to transactivate the SPRR2A promoter and with RUNX1 to transactivate the ANGPT1 promoter. Also transactivates collagenase, CCL20, CLND7, FLG, KRT8, NOS2, PTGS2, SPRR2B, TGFBR2 and TGM3 promoters. Represses KRT4 promoter activity. Involved in mediating vascular inflammation. May play an important role in epithelial cell differentiation and tumorigenesis. May be a critical downstream effector of the ERBB2 signaling pathway. May be associated with mammary gland development and involution. Plays an important role in the regulation of transcription with TATA-less promoters in preimplantation embryos, which is essential in preimplantation development. This is ETS-related transcription factor Elf-3 from Homo sapiens (Human).